The following is a 501-amino-acid chain: Glycerol kinase (501 aa).

Position 11 (Thr-11) interacts with ADP. ATP contacts are provided by Thr-11, Thr-12, and Ser-13. Thr-11 is a binding site for sn-glycerol 3-phosphate. Arg-15 provides a ligand contact to ADP. Residues Arg-81, Glu-82, Tyr-133, and Asp-242 each contribute to the sn-glycerol 3-phosphate site. Positions 81, 82, 133, 242, and 243 each coordinate glycerol. Residues Thr-264 and Gly-307 each contribute to the ADP site. ATP is bound by residues Thr-264, Gly-307, Gln-311, and Gly-409. Gly-409 and Asn-413 together coordinate ADP.

This sequence belongs to the FGGY kinase family.

The enzyme catalyses glycerol + ATP = sn-glycerol 3-phosphate + ADP + H(+). It participates in polyol metabolism; glycerol degradation via glycerol kinase pathway; sn-glycerol 3-phosphate from glycerol: step 1/1. Its activity is regulated as follows. Inhibited by fructose 1,6-bisphosphate (FBP). Its function is as follows. Key enzyme in the regulation of glycerol uptake and metabolism. Catalyzes the phosphorylation of glycerol to yield sn-glycerol 3-phosphate. The polypeptide is Glycerol kinase (Borreliella burgdorferi (strain ATCC 35210 / DSM 4680 / CIP 102532 / B31) (Borrelia burgdorferi)).